We begin with the raw amino-acid sequence, 453 residues long: Bis(5'-adenosyl)-triphosphatase ENPP4 (453 aa).

The N-terminal stretch at 1 to 15 (MKLLVILLFSGLITG) is a signal peptide. Over 16 to 407 (FRSDSSSSLP…DQWCINLPEA (392 aa)) the chain is Extracellular. Residues Asp34 and Thr70 each coordinate Zn(2+). Thr70 serves as the catalytic AMP-threonine intermediate. Residues Asn91 and Tyr154 each contribute to the substrate site. Residues Asn155 and Asn166 are each glycosylated (N-linked (GlcNAc...) asparagine). Zn(2+)-binding residues include Asp189, His193, Asp237, and His238. Asp189 is a substrate binding site. The cysteines at positions 254 and 287 are disulfide-linked. Asn276 carries an N-linked (GlcNAc...) asparagine glycan. His336 is a Zn(2+) binding site. Residue Asn386 is glycosylated (N-linked (GlcNAc...) asparagine). A disulfide bond links Cys394 and Cys401. The chain crosses the membrane as a helical span at residues 408 to 428 (IAIVIGSLLVLTMLTCLIIIM). At 429-453 (QNRLSVPRPFSRLQLQEDDDDPLIG) the chain is on the cytoplasmic side.

Belongs to the nucleotide pyrophosphatase/phosphodiesterase family. It depends on Zn(2+) as a cofactor. In terms of tissue distribution, expressed on the surface of vascular endothelia.

Its subcellular location is the cell membrane. It catalyses the reaction P(1),P(3)-bis(5'-adenosyl) triphosphate + H2O = AMP + ADP + 2 H(+). Functionally, hydrolyzes extracellular Ap3A into AMP and ADP, and Ap4A into AMP and ATP. Ap3A and Ap4A are diadenosine polyphosphates thought to induce proliferation of vascular smooth muscle cells. Acts as a procoagulant, mediating platelet aggregation at the site of nascent thrombus via release of ADP from Ap3A and activation of ADP receptors. The polypeptide is Bis(5'-adenosyl)-triphosphatase ENPP4 (ENPP4) (Homo sapiens (Human)).